A 203-amino-acid chain; its full sequence is LexA repressor (203 aa).

The H-T-H motif DNA-binding region spans 32–52 (RAEICTAFGFRSPNAAETHLR). Active-site for autocatalytic cleavage activity residues include Ser-121 and Lys-158.

It belongs to the peptidase S24 family. Homodimer.

The enzyme catalyses Hydrolysis of Ala-|-Gly bond in repressor LexA.. In terms of biological role, represses a number of genes involved in the response to DNA damage (SOS response), including recA and lexA. In the presence of single-stranded DNA, RecA interacts with LexA causing an autocatalytic cleavage which disrupts the DNA-binding part of LexA, leading to derepression of the SOS regulon and eventually DNA repair. This Aromatoleum aromaticum (strain DSM 19018 / LMG 30748 / EbN1) (Azoarcus sp. (strain EbN1)) protein is LexA repressor.